The chain runs to 726 residues: Catalase-peroxidase (726 aa).

The interval Met-1–Thr-33 is disordered. A cross-link (tryptophyl-tyrosyl-methioninium (Trp-Tyr) (with M-252)) is located at residues Trp-105–Tyr-226. The active-site Proton acceptor is the His-106. The segment at residues Tyr-226–Met-252 is a cross-link (tryptophyl-tyrosyl-methioninium (Tyr-Met) (with W-105)). Residue His-267 coordinates heme b.

Belongs to the peroxidase family. Peroxidase/catalase subfamily. Homodimer or homotetramer. The cofactor is heme b. Formation of the three residue Trp-Tyr-Met cross-link is important for the catalase, but not the peroxidase activity of the enzyme.

The catalysed reaction is H2O2 + AH2 = A + 2 H2O. The enzyme catalyses 2 H2O2 = O2 + 2 H2O. Its function is as follows. Bifunctional enzyme with both catalase and broad-spectrum peroxidase activity. This is Catalase-peroxidase from Escherichia coli (strain K12 / DH10B).